The chain runs to 205 residues: MRGKLITLEGIDGSGKSTVAEKLQKNPEIKAFKPVFTREPTRGTLTGDAVEKAIQSDTDQFAELFLFTADHAEHLAKLIKPALENGKIVISDRYSDSRYAYQGITLKTRLENPLEWVKDLHRSWTIVPDLTFLFDIRPEISIERCGKRGEQSKFEKLEFLQGVRAIFLKLAADDPERFVVIDASRSPEYIEKEVVKKILEFLSRN.

10-17 provides a ligand contact to ATP; the sequence is GIDGSGKS.

Belongs to the thymidylate kinase family.

The enzyme catalyses dTMP + ATP = dTDP + ADP. The sequence is that of Probable thymidylate kinase from Methanosarcina barkeri (strain Fusaro / DSM 804).